Reading from the N-terminus, the 542-residue chain is MPRRGLILHTRTHWLLLGLALLCSLVLFMYLLECAPQTDGNASLPGVVGENYGKEYYQALLQEQEEHYQTRATSLKRQIAQLKQELQEMSEKMRSLQERRNVGANGIGYQSNKEQAPSDLLEFLHSQIDKAEVSIGAKLPSEYGVIPFESFTLMKVFQLEMGLTRHPEEKPVRKDKRDELVEVIEAGLEVINNPDEDDEQEDEEGPLGEKLIFNENDFVEGYYRTERDKGTQYELFFKKADLTEYRHVTLFRPFGPLMKVKSEMIDITRSIINIIVPLAERTEAFVQFMQNFRDVCIHQDKKIHLTVVYFGKEGLSKVKSILESVTSESNFHNYTLVSLNEEFNRGRGLNVGARAWDKGEVLMFFCDVDIYFSAEFLNSCRLNAEPGKKVFYPVVFSLYNPAIVYANQEVPPPVEQQLVHKKDSGFWRDFGFGMTCQYRSDFLTIGGFDMEVKGWGGEDVHLYRKYLHGDLIVIRTPVPGLFHLWHEKRCADELTPEQYRMCIQSKAMNEASHSHLGMLVFREEIETHLHKQAYRTNSEAVG.

Residues 1–11 lie on the Cytoplasmic side of the membrane; that stretch reads MPRRGLILHTR. A helical; Signal-anchor for type II membrane protein membrane pass occupies residues 12-32; it reads THWLLLGLALLCSLVLFMYLL. Residues 33–542 lie on the Lumenal side of the membrane; that stretch reads ECAPQTDGNA…AYRTNSEAVG (510 aa). Asn41 carries an N-linked (GlcNAc...) asparagine glycan. The stretch at 59–105 forms a coiled coil; sequence ALLQEQEEHYQTRATSLKRQIAQLKQELQEMSEKMRSLQERRNVGAN. N-linked (GlcNAc...) asparagine glycosylation occurs at Asn333. Asp369 and His486 together coordinate a divalent metal cation.

The protein belongs to the chondroitin N-acetylgalactosaminyltransferase family. Ubiquitous.

It is found in the golgi apparatus. The protein localises to the golgi stack membrane. The catalysed reaction is 3-O-(beta-D-GlcA-(1-&gt;3)-beta-D-Gal-(1-&gt;3)-beta-D-Gal-(1-&gt;4)-beta-D-Xyl)-L-seryl-[protein] + UDP-N-acetyl-alpha-D-galactosamine = 3-O-(beta-D-GalNAc-(1-&gt;4)-beta-D-GlcA-(1-&gt;3)-beta-D-Gal-(1-&gt;3)-beta-D-Gal-(1-&gt;4)-beta-D-Xyl)-L-seryl-[protein] + UDP + H(+). In terms of biological role, transfers 1,4-N-acetylgalactosamine (GalNAc) from UDP-GalNAc to the non-reducing end of glucuronic acid (GlcUA). Required for addition of the first GalNAc to the core tetrasaccharide linker and for elongation of chondroitin chains. This chain is Chondroitin sulfate N-acetylgalactosaminyltransferase 2 (CSGALNACT2), found in Homo sapiens (Human).